The chain runs to 533 residues: Laccase-2 (533 aa).

A signal peptide spans 1-23; the sequence is MFPGARILATLTLALHLLHGAHA. Plastocyanin-like domains are found at residues 25–171, 173–336, and 382–501; these read IGPA…LSLY, IDNA…LETN, and TAPV…FAED. Positions 98, 100, 143, and 145 each coordinate Cu cation. Disulfide bonds link C119–C516 and C151–C238. Cu cation contacts are provided by H427, H430, and H432. The N-linked (GlcNAc...) (high mannose) asparagine glycan is linked to N467. Positions 483, 484, 485, and 489 each coordinate Cu cation.

Belongs to the multicopper oxidase family. It depends on Cu cation as a cofactor. N-glycosylated at Asn-467; contains a high-mannose glycan with a varying number of mannose residues.

The protein localises to the secreted. It carries out the reaction 4 hydroquinone + O2 = 4 benzosemiquinone + 2 H2O. Its function is as follows. Lignin degradation and detoxification of lignin-derived products. The protein is Laccase-2 (POX2) of Pleurotus ostreatus (Oyster mushroom).